Consider the following 424-residue polypeptide: Homoserine O-succinyltransferase (424 aa).

One can recognise an AB hydrolase-1 domain in the interval 67–381 (NAVLVCHALN…PHGHDAFLLD (315 aa)). Catalysis depends on Ser-173, which acts as the Nucleophile. Arg-243 contributes to the substrate binding site. Active-site residues include Asp-342 and His-375. Asp-376 provides a ligand contact to substrate.

Belongs to the AB hydrolase superfamily. MetX family. Homodimer.

It localises to the cytoplasm. It catalyses the reaction L-homoserine + succinyl-CoA = O-succinyl-L-homoserine + CoA. It participates in amino-acid biosynthesis; L-methionine biosynthesis via de novo pathway; O-succinyl-L-homoserine from L-homoserine: step 1/1. Functionally, transfers a succinyl group from succinyl-CoA to L-homoserine, forming succinyl-L-homoserine. In vitro, also has serine succinyl transferase activity. The chain is Homoserine O-succinyltransferase from Bordetella petrii (strain ATCC BAA-461 / DSM 12804 / CCUG 43448).